Reading from the N-terminus, the 335-residue chain is Cathepsin B-like cysteine proteinase 4 (335 aa).

The first 15 residues, 1 to 15 (MKYLILAALVAVTAG), serve as a signal peptide directing secretion. Positions 16 to 80 (LVIPLVPKTQ…VVKHDINEDT (65 aa)) are excised as a propeptide. Intrachain disulfides connect cysteine 94/cysteine 123, cysteine 106/cysteine 150, cysteine 142/cysteine 209, cysteine 143/cysteine 146, cysteine 179/cysteine 213, and cysteine 187/cysteine 199. The active site involves cysteine 109. Asparagine 193 is a glycosylation site (N-linked (GlcNAc...) asparagine). Active-site residues include histidine 281 and asparagine 301.

It belongs to the peptidase C1 family.

The protein localises to the secreted. Its function is as follows. Thiol protease which shows activity against the fluorogenic substrate z-Arg-Arg-AMC. The polypeptide is Cathepsin B-like cysteine proteinase 4 (cpr-4) (Caenorhabditis elegans).